Reading from the N-terminus, the 518-residue chain is Cytochrome P450 26C1 (518 aa).

A helical membrane pass occupies residues 293-313; the sequence is LLFAAFFTTASASTSLILLLL. A heme-binding site is contributed by cysteine 455.

Belongs to the cytochrome P450 family. Heme serves as cofactor.

It localises to the membrane. The catalysed reaction is an organic molecule + reduced [NADPH--hemoprotein reductase] + O2 = an alcohol + oxidized [NADPH--hemoprotein reductase] + H2O + H(+). It catalyses the reaction all-trans-retinoate + reduced [NADPH--hemoprotein reductase] + O2 = all-trans-4-hydroxyretinoate + oxidized [NADPH--hemoprotein reductase] + H2O + H(+). The enzyme catalyses all-trans-4-hydroxyretinoate + reduced [NADPH--hemoprotein reductase] + O2 = all-trans-4-oxoretinoate + oxidized [NADPH--hemoprotein reductase] + 2 H2O + H(+). It carries out the reaction 9-cis-retinoate + reduced [NADPH--hemoprotein reductase] + O2 = 9-cis-4-hydroxyretinoate + oxidized [NADPH--hemoprotein reductase] + H2O + H(+). The catalysed reaction is 9-cis-4-hydroxyretinoate + reduced [NADPH--hemoprotein reductase] + O2 = 9-cis-4-oxoretinoate + oxidized [NADPH--hemoprotein reductase] + 2 H2O + H(+). It catalyses the reaction all-trans-4-hydroxy-13,14-dihydroretinoate + reduced [NADPH--hemoprotein reductase] + O2 = all-trans-4-oxo-13,14-dihydroretinoate + oxidized [NADPH--hemoprotein reductase] + 2 H2O + H(+). The enzyme catalyses all-trans-13,14-dihydroretinoate + reduced [NADPH--hemoprotein reductase] + O2 = all-trans-4-hydroxy-13,14-dihydroretinoate + oxidized [NADPH--hemoprotein reductase] + H2O + H(+). Functionally, a cytochrome P450 monooxygenase involved in the metabolism of retinoates (RAs), the active metabolites of vitamin A, and critical signaling molecules in animals. RAs exist as at least four different isomers: all-trans-RA (atRA), 9-cis-RA, 13-cis-RA, and 9,13-dicis-RA, where atRA is considered to be the biologically active isomer, although 9-cis-RA and 13-cis-RA also have activity. Catalyzes the oxidation of atRA primarily at C-4. Oxidation of atRA limits its biological activity and initiates a degradative process leading to its eventual elimination, thereby contributes to the regulation of atRA homeostasis and signaling. Able to metabolize other RAs such as 9-cis with high efficiency. Can oxidize all-trans-13,14-dihydroretinoate (DRA) to metabolites which could include all-trans-4-oxo-DRA, all-trans-4-hydroxy-DRA, all-trans-5,8-epoxy-DRA, and all-trans-18-hydroxy-DRA. Shares sequence similarity with other CYP26 family members, but has higher affinity to 9-cis-RA and is much less sensitive to the inhibitory effects of ketoconazole. In cooperation with Cyp26a1, contributes to the CNS patterning and the development of regions of higher visual acuity. The polypeptide is Cytochrome P450 26C1 (Mus musculus (Mouse)).